The primary structure comprises 441 residues: Serine/threonine-protein phosphatase 4 regulatory subunit 2 (441 aa).

The span at 201–213 shows a compositional bias: acidic residues; sequence DEEEGFFDGDEDR. Disordered regions lie at residues 201-220, 242-348, and 364-418; these read DEEE…NKSK, INDD…LTTP, and SPSS…SQED. The segment covering 249 to 261 has biased composition (polar residues); it reads NKGQNCQSDVTKN. Positions 264 to 302 are enriched in acidic residues; that stretch reads DDEDDDDNDDDYREDGADEDDEDDDHMGSTDDDEDDDED. At threonine 347 the chain carries Phosphothreonine. Positions 388-398 are enriched in basic and acidic residues; sequence EDAHENHEGRS.

Belongs to the PPP4R2 family. In terms of assembly, regulatory subunit (R2) of the histone H2A phosphatase complex (HTP-C) consisting of PPH3, PSY2 and PSY4. Interacts with SPT4 and SPT5.

The protein resides in the nucleus. In terms of biological role, regulatory subunit of the histone H2A phosphatase complex, which dephosphorylates H2AS128ph (gamma-H2A) that has been displaced from sites of DNA lesions in the double-stranded DNA break repair process. Dephosphorylation is necessary for efficient recovery from the DNA damage checkpoint. The sequence is that of Serine/threonine-protein phosphatase 4 regulatory subunit 2 (PSY4) from Saccharomyces cerevisiae (strain ATCC 204508 / S288c) (Baker's yeast).